The primary structure comprises 588 residues: Adenine deaminase (588 aa).

It belongs to the metallo-dependent hydrolases superfamily. Adenine deaminase family. In terms of assembly, homodimer. The cofactor is Mn(2+).

The enzyme catalyses adenine + H2O + H(+) = hypoxanthine + NH4(+). The protein is Adenine deaminase of Escherichia coli (strain SE11).